Here is a 54-residue protein sequence, read N- to C-terminus: ATP synthase protein 8 (54 aa).

Residues 8-28 traverse the membrane as a helical segment; that stretch reads WWLLNFFLGWTSLLVIFIILL.

Belongs to the ATPase protein 8 family. As to quaternary structure, F-type ATPases have 2 components, CF(1) - the catalytic core - and CF(0) - the membrane proton channel.

The protein localises to the mitochondrion membrane. Mitochondrial membrane ATP synthase (F(1)F(0) ATP synthase or Complex V) produces ATP from ADP in the presence of a proton gradient across the membrane which is generated by electron transport complexes of the respiratory chain. F-type ATPases consist of two structural domains, F(1) - containing the extramembraneous catalytic core and F(0) - containing the membrane proton channel, linked together by a central stalk and a peripheral stalk. During catalysis, ATP synthesis in the catalytic domain of F(1) is coupled via a rotary mechanism of the central stalk subunits to proton translocation. Part of the complex F(0) domain. Minor subunit located with subunit a in the membrane. The sequence is that of ATP synthase protein 8 (MT-ATP8) from Patiria pectinifera (Starfish).